The chain runs to 237 residues: Phosphoribosylaminoimidazole-succinocarboxamide synthase (237 aa).

The protein belongs to the SAICAR synthetase family.

The enzyme catalyses 5-amino-1-(5-phospho-D-ribosyl)imidazole-4-carboxylate + L-aspartate + ATP = (2S)-2-[5-amino-1-(5-phospho-beta-D-ribosyl)imidazole-4-carboxamido]succinate + ADP + phosphate + 2 H(+). It participates in purine metabolism; IMP biosynthesis via de novo pathway; 5-amino-1-(5-phospho-D-ribosyl)imidazole-4-carboxamide from 5-amino-1-(5-phospho-D-ribosyl)imidazole-4-carboxylate: step 1/2. This chain is Phosphoribosylaminoimidazole-succinocarboxamide synthase, found in Fusobacterium nucleatum subsp. nucleatum (strain ATCC 25586 / DSM 15643 / BCRC 10681 / CIP 101130 / JCM 8532 / KCTC 2640 / LMG 13131 / VPI 4355).